Here is a 189-residue protein sequence, read N- to C-terminus: Lipid A acyltransferase PagP (189 aa).

An N-terminal signal peptide occupies residues 1–23 (MKLKSVLYLLMLLNCLGLKSAHA). Residues His-61, Asp-104, and Ser-105 contribute to the active site.

Belongs to the lipid A palmitoyltransferase family. In terms of assembly, homodimer.

It localises to the cell outer membrane. The enzyme catalyses a lipid A + a 1,2-diacyl-sn-glycero-3-phosphocholine = a hepta-acyl lipid A + a 2-acyl-sn-glycero-3-phosphocholine. It carries out the reaction a lipid IVA + a 1,2-diacyl-sn-glycero-3-phosphocholine = a lipid IVB + a 2-acyl-sn-glycero-3-phosphocholine. It catalyses the reaction a lipid IIA + a 1,2-diacyl-sn-glycero-3-phosphocholine = a lipid IIB + a 2-acyl-sn-glycero-3-phosphocholine. Functionally, transfers a fatty acid residue from the sn-1 position of a phospholipid to the N-linked hydroxyfatty acid chain on the proximal unit of lipid A or its precursors. This chain is Lipid A acyltransferase PagP, found in Erwinia amylovora (strain ATCC 49946 / CCPPB 0273 / Ea273 / 27-3).